A 194-amino-acid chain; its full sequence is RNA polymerase II subunit A C-terminal domain phosphatase SSU72 like protein 1 (194 aa).

It belongs to the SSU72 phosphatase family.

The protein resides in the nucleus. It carries out the reaction O-phospho-L-seryl-[protein] + H2O = L-seryl-[protein] + phosphate. It catalyses the reaction O-phospho-L-threonyl-[protein] + H2O = L-threonyl-[protein] + phosphate. Protein phosphatase that catalyzes the dephosphorylation of the C-terminal domain of RNA polymerase II. Plays a role in RNA processing and termination. This Homo sapiens (Human) protein is RNA polymerase II subunit A C-terminal domain phosphatase SSU72 like protein 1.